Consider the following 440-residue polypeptide: MRLSRFFMPILKENPKEAEIVSHRLMLRAGMIRQQSQGIYSWLPLGKRVLDKVNAIIRDEQNRAGAIELSMPTLQSAELWQESGRYDAYGKEMLRIKDRQDRPMLYGPTNEEMVTDIFRSSVKSYKDLPLNLYHIQLKFRDEIRPRFGTMRSREFMMKDAYSFDLTREAAEHSYNKMFAAYLRTFDRLGLRAIPMRADTGPIGGKLSHEFIILADTGESEVFCHKDFVDFDVPGEHTDFDSVEGLQAIFDKWTSLYAATSEMHDEAAFNAVPEGDRLSARGIEVGHIFYFGTKYSEPMGAKVQGPDGKEHFVHMGSYGIGPTRLVPAIIEASHDDNGIIWPASVAPFDIVVINMKAGDQACDDTCELIYAALSKAGKDVLYDDTDDRAGTKFATADLIGVPVQIIAGPRAVANGEVEVKDRKTGARETMTIEAAINRFVA.

It belongs to the class-II aminoacyl-tRNA synthetase family. ProS type 2 subfamily. Homodimer.

The protein localises to the cytoplasm. The enzyme catalyses tRNA(Pro) + L-proline + ATP = L-prolyl-tRNA(Pro) + AMP + diphosphate. Its function is as follows. Catalyzes the attachment of proline to tRNA(Pro) in a two-step reaction: proline is first activated by ATP to form Pro-AMP and then transferred to the acceptor end of tRNA(Pro). This Rhizobium johnstonii (strain DSM 114642 / LMG 32736 / 3841) (Rhizobium leguminosarum bv. viciae) protein is Proline--tRNA ligase.